A 209-amino-acid chain; its full sequence is Molybdenum cofactor guanylyltransferase (209 aa).

GTP contacts are provided by residues leucine 13–glycine 15, lysine 26, asparagine 54, aspartate 74, and aspartate 104. Aspartate 104 contributes to the Mg(2+) binding site.

This sequence belongs to the MobA family. Monomer. The cofactor is Mg(2+).

It localises to the cytoplasm. It catalyses the reaction Mo-molybdopterin + GTP + H(+) = Mo-molybdopterin guanine dinucleotide + diphosphate. Transfers a GMP moiety from GTP to Mo-molybdopterin (Mo-MPT) cofactor (Moco or molybdenum cofactor) to form Mo-molybdopterin guanine dinucleotide (Mo-MGD) cofactor. This Acinetobacter baumannii (strain ACICU) protein is Molybdenum cofactor guanylyltransferase.